We begin with the raw amino-acid sequence, 366 residues long: Melatonin receptor type 1A (366 aa).

Residues 1 to 45 are Extracellular-facing; that stretch reads MAGRLWGSPGGTPKGNGSSALLNVSQAAPGAGDGVRPRPSWLAAT. 2 N-linked (GlcNAc...) asparagine glycosylation sites follow: asparagine 16 and asparagine 23. The helical transmembrane segment at 46 to 66 threads the bilayer; the sequence is LASILIFTIVVDIVGNLLVVL. Topologically, residues 67 to 79 are cytoplasmic; that stretch reads SVYRNKKLRNAGN. Residues 80-100 form a helical membrane-spanning segment; the sequence is VFVVSLAVADLLVAVYPYPLA. At 101-118 the chain is on the extracellular side; sequence LASIVNNGWSLSSLHCQL. Cysteine 116 and cysteine 193 form a disulfide bridge. Residues 119–139 form a helical membrane-spanning segment; it reads SGFLMGLSVIGSVFSITGIAI. Residues 140–158 lie on the Cytoplasmic side of the membrane; that stretch reads NRYCCICHSLRYGKLYSGT. A helical membrane pass occupies residues 159–179; that stretch reads NSLCYVFLIWTLTLVAIVPNL. At 180–203 the chain is on the extracellular side; sequence CVGTLQYDPRIYSCTFTQSVSSAY. A helical transmembrane segment spans residues 204–224; the sequence is TIAVVVFHFIVPMLVVVFCYL. Topologically, residues 225–256 are cytoplasmic; sequence RIWALVLQVRWKVKPDNKPKLKPQDFRNFVTM. A helical transmembrane segment spans residues 257–277; the sequence is FVVFVLFAICWAPLNFIGLVV. The Extracellular segment spans residues 278–290; it reads ASDPASMAPRIPE. A helical transmembrane segment spans residues 291-311; sequence WLFVASYYMAYFNSCLNAIIY. Residues 312–366 are Cytoplasmic-facing; the sequence is GLLNQNFRQEYRKIIVSLCTTKMFFVDSSNHVADRIKRKPSPLIANHNLIKVDSV.

Belongs to the G-protein coupled receptor 1 family.

It is found in the cell membrane. High affinity receptor for melatonin. Likely to mediate the reproductive and circadian actions of melatonin. The activity of this receptor is mediated by pertussis toxin sensitive G proteins that inhibit adenylate cyclase activity. Possibly involved in sleep induction, by melatonin activation of the potassium channel KCNMA1/BK and the dissociation of G-beta and G-gamma subunits, thereby decreasing synaptic transmission. In Ovis aries (Sheep), this protein is Melatonin receptor type 1A (MTNR1A).